We begin with the raw amino-acid sequence, 454 residues long: Caspase-9 (454 aa).

A CARD domain is found at 1–92; that stretch reads MDEADRQLLR…GTLASLLQSG (92 aa). Residue threonine 163 is modified to Phosphothreonine; by MAPK1. Tyrosine 191 carries the phosphotyrosine; by ABL1 modification. Residues histidine 275 and cysteine 325 contribute to the active site. 2 positions are modified to phosphoserine: serine 340 and serine 348. A propeptide spanning residues 354–367 is cleaved from the precursor; it reads AVPYQEGPRPLDQL.

The protein belongs to the peptidase C14A family. Heterotetramer that consists of two anti-parallel arranged heterodimers, each one formed by a 35 kDa (p35) and a 10 kDa (p10) subunit. Caspase-9 and APAF1 bind to each other via their respective NH2-terminal CED-3 homologous domains in the presence of cytochrome C and ATP. Interacts (inactive form) with EFHD2. Interacts with HAX1. Interacts with BIRC2/c-IAP1, XIAP/BIRC4, BIRC5/survivin, BIRC6/bruce and BIRC7/livin. Interacts with ABL1 (via SH3 domain); the interaction is direct and increased in the response of cells to genotoxic stress and ABL1/c-Abl activation. Interacts with BCL2L10. Cleavages at Asp-353 by granzyme B and at Asp-368 by caspase-3 generate the two active subunits. Caspase-8 and -10 can also be involved in these processing events. Post-translationally, phosphorylated at Thr-163 by MAPK1/ERK2. Phosphorylation at Thr-163 is sufficient to block caspase-9 processing and subsequent caspase-3 activation. Phosphorylation on Tyr-191 by ABL1/c-Abl; occurs in the response of cells to DNA damage. In terms of processing, ubiquitinated by BIRC6; this activity is inhibited by DIABLO/SMAC.

The catalysed reaction is Strict requirement for an Asp residue at position P1 and with a marked preference for His at position P2. It has a preferred cleavage sequence of Leu-Gly-His-Asp-|-Xaa.. Its activity is regulated as follows. Inhibited by BIRC6; following inhibition of BIRC6-caspase binding by DIABLO/SMAC, BIRC6 is subjected to caspase cleavage, leading to an increase in active caspases. Involved in the activation cascade of caspases responsible for apoptosis execution. Binding of caspase-9 to Apaf-1 leads to activation of the protease which then cleaves and activates effector caspases caspase-3 (CASP3) or caspase-7 (CASP7). Promotes DNA damage-induced apoptosis in a ABL1/c-Abl-dependent manner. Proteolytically cleaves poly(ADP-ribose) polymerase (PARP). Cleaves BIRC6 following inhibition of BIRC6-caspase binding by DIABLO/SMAC. The sequence is that of Caspase-9 (Casp9) from Mus musculus (Mouse).